Consider the following 93-residue polypeptide: CRISPR-associated endoribonuclease Cas2 3 (93 aa).

D10 contributes to the Mg(2+) binding site.

The protein belongs to the CRISPR-associated endoribonuclease Cas2 protein family. Homodimer, forms a heterotetramer with a Cas1 homodimer. It depends on Mg(2+) as a cofactor.

In terms of biological role, CRISPR (clustered regularly interspaced short palindromic repeat), is an adaptive immune system that provides protection against mobile genetic elements (viruses, transposable elements and conjugative plasmids). CRISPR clusters contain sequences complementary to antecedent mobile elements and target invading nucleic acids. CRISPR clusters are transcribed and processed into CRISPR RNA (crRNA). Functions as a ssRNA-specific endoribonuclease. Involved in the integration of spacer DNA into the CRISPR cassette. The sequence is that of CRISPR-associated endoribonuclease Cas2 3 from Chloroflexus aurantiacus (strain ATCC 29366 / DSM 635 / J-10-fl).